The primary structure comprises 124 residues: Hydrogenase maturation factor HypA (124 aa).

A Ni(2+)-binding site is contributed by His-2. Zn(2+) is bound by residues Cys-78, Cys-81, Cys-97, and Cys-100.

This sequence belongs to the HypA/HybF family.

Its function is as follows. Involved in the maturation of [NiFe] hydrogenases. Required for nickel insertion into the metal center of the hydrogenase. The sequence is that of Hydrogenase maturation factor HypA from Methanococcus vannielii (strain ATCC 35089 / DSM 1224 / JCM 13029 / OCM 148 / SB).